The following is a 282-amino-acid chain: 1,4-dihydroxy-6-naphtoate synthase (282 aa).

Residues 57–59 (KVS) and 109–110 (TA) contribute to the substrate site. Residue His153 is the Proton acceptor of the active site.

It belongs to the MqnA/MqnD family. MqnD subfamily.

The enzyme catalyses cyclic dehypoxanthinylfutalosinate = 1,4-dihydroxy-6-naphthoate + dihydroxyacetone. It functions in the pathway quinol/quinone metabolism; menaquinone biosynthesis. Catalyzes the conversion of cyclic dehypoxanthine futalosine (cyclic DHFL) into 1,4-dihydroxy-6-naphthoate, a step in the biosynthesis of menaquinone (MK, vitamin K2). The polypeptide is 1,4-dihydroxy-6-naphtoate synthase (Streptomyces coelicolor (strain ATCC BAA-471 / A3(2) / M145)).